Here is a 1790-residue protein sequence, read N- to C-terminus: Protein FAM186A (1790 aa).

This sequence belongs to the FAM186 family.

The sequence is that of Protein FAM186A (FAM186A) from Mus musculus (Mouse).